A 264-amino-acid polypeptide reads, in one-letter code: Thymidylate synthase (264 aa).

DUMP contacts are provided by residues R21 and 126–127 (RR). C146 functions as the Nucleophile in the catalytic mechanism. Residues 166–169 (RSAD), N177, and 207–209 (HLY) each bind dUMP. A (6R)-5,10-methylene-5,6,7,8-tetrahydrofolate-binding site is contributed by D169. A263 serves as a coordination point for (6R)-5,10-methylene-5,6,7,8-tetrahydrofolate.

The protein belongs to the thymidylate synthase family. Bacterial-type ThyA subfamily. In terms of assembly, homodimer.

The protein localises to the cytoplasm. It catalyses the reaction dUMP + (6R)-5,10-methylene-5,6,7,8-tetrahydrofolate = 7,8-dihydrofolate + dTMP. It participates in pyrimidine metabolism; dTTP biosynthesis. Functionally, catalyzes the reductive methylation of 2'-deoxyuridine-5'-monophosphate (dUMP) to 2'-deoxythymidine-5'-monophosphate (dTMP) while utilizing 5,10-methylenetetrahydrofolate (mTHF) as the methyl donor and reductant in the reaction, yielding dihydrofolate (DHF) as a by-product. This enzymatic reaction provides an intracellular de novo source of dTMP, an essential precursor for DNA biosynthesis. This is Thymidylate synthase from Bradyrhizobium sp. (strain BTAi1 / ATCC BAA-1182).